The following is a 331-amino-acid chain: DNA-directed RNA polymerase subunit alpha (331 aa).

The interval 1–232 (MQGTFRDFLK…DQLSVFVDLE (232 aa)) is alpha N-terminal domain (alpha-NTD). The segment at 247–331 (VDPILLRPID…AGLGEDRVVG (85 aa)) is alpha C-terminal domain (alpha-CTD).

The protein belongs to the RNA polymerase alpha chain family. Homodimer. The RNAP catalytic core consists of 2 alpha, 1 beta, 1 beta' and 1 omega subunit. When a sigma factor is associated with the core the holoenzyme is formed, which can initiate transcription.

It carries out the reaction RNA(n) + a ribonucleoside 5'-triphosphate = RNA(n+1) + diphosphate. In terms of biological role, DNA-dependent RNA polymerase catalyzes the transcription of DNA into RNA using the four ribonucleoside triphosphates as substrates. In Alkalilimnicola ehrlichii (strain ATCC BAA-1101 / DSM 17681 / MLHE-1), this protein is DNA-directed RNA polymerase subunit alpha.